The sequence spans 469 residues: tRNA modification GTPase MnmE (469 aa).

Arginine 38, glutamate 95, and arginine 134 together coordinate (6S)-5-formyl-5,6,7,8-tetrahydrofolate. Residues 230 to 392 (GIRVALVGPP…LRRGLAALVD (163 aa)) form the TrmE-type G domain. Residues 240 to 245 (NAGKSS), 259 to 265 (SAQAGTT), and 284 to 287 (DTAG) each bind GTP. Mg(2+) is bound by residues serine 244 and threonine 265. (6S)-5-formyl-5,6,7,8-tetrahydrofolate is bound at residue lysine 468.

It belongs to the TRAFAC class TrmE-Era-EngA-EngB-Septin-like GTPase superfamily. TrmE GTPase family. Homodimer. Heterotetramer of two MnmE and two MnmG subunits. Requires K(+) as cofactor.

The protein localises to the cytoplasm. Exhibits a very high intrinsic GTPase hydrolysis rate. Involved in the addition of a carboxymethylaminomethyl (cmnm) group at the wobble position (U34) of certain tRNAs, forming tRNA-cmnm(5)s(2)U34. This Halorhodospira halophila (strain DSM 244 / SL1) (Ectothiorhodospira halophila (strain DSM 244 / SL1)) protein is tRNA modification GTPase MnmE.